Reading from the N-terminus, the 113-residue chain is U11-theraphotoxin-Hhn1d (113 aa).

The signal sequence occupies residues Met1 to Ala21. The propeptide occupies Asp22–Arg74. 3 disulfides stabilise this stretch: Cys75–Cys90, Cys82–Cys95, and Cys89–Cys110.

The protein belongs to the neurotoxin 14 (magi-1) family. 01 (HNTX-16) subfamily. In terms of tissue distribution, expressed by the venom gland.

The protein localises to the secreted. Its function is as follows. Probable ion channel inhibitor. The chain is U11-theraphotoxin-Hhn1d from Cyriopagopus hainanus (Chinese bird spider).